Here is a 346-residue protein sequence, read N- to C-terminus: Annexin A1 (346 aa).

The residue at position 5 (S5) is a Phosphoserine; by TRPM7. Q19 participates in a covalent cross-link: Isoglutamyl lysine isopeptide (Gln-Lys) (interchain with K-?). Position 21 is a phosphotyrosine; by EGFR (Y21). Phosphoserine is present on residues S34 and S37. 4 Annexin repeats span residues 42 to 113 (FNPS…ALLK), 114 to 185 (TPAR…SLAK), 197 to 269 (DLAD…AIVK), and 273 to 344 (SKPM…ALCG). Position 58 is an N6-acetyllysine (K58). Residues G59, V60, E62, K97, L100, E105, M127, G129, G131, T132, and E134 each coordinate Ca(2+). T136 is modified (phosphothreonine). Positions 171, 210, and 213 each coordinate Ca(2+). A Glycyl lysine isopeptide (Lys-Gly) (interchain with G-Cter in SUMO1); alternate cross-link involves residue K214. K214 is covalently cross-linked (Glycyl lysine isopeptide (Lys-Gly) (interchain with G-Cter in SUMO2); alternate). Positions 215, 253, 255, and 256 each coordinate Ca(2+). Residue K257 forms a Glycyl lysine isopeptide (Lys-Gly) (interchain with G-Cter in SUMO1) linkage. Positions 261, 286, 288, and 290 each coordinate Ca(2+). K312 is modified (N6-acetyllysine). Residues C324 and C343 are joined by a disulfide bond. 3 residues coordinate Ca(2+): L328, E330, and T331. K332 participates in a covalent cross-link: Glycyl lysine isopeptide (Lys-Gly) (interchain with G-Cter in SUMO1). Position 336 (E336) interacts with Ca(2+).

Belongs to the annexin family. Homodimer; non-covalently linked. Homodimer; linked by transglutamylation. Homodimers linked by transglutamylation are observed in placenta, but not in other tissues. Interacts with S100A11. Heterotetramer, formed by two molecules each of S100A11 and ANXA1. Interacts with DYSF. Interacts with EGFR. Post-translationally, phosphorylated by protein kinase C, EGFR and TRPM7. Phosphorylated in response to EGF treatment. In terms of processing, sumoylated. Proteolytically cleaved by cathepsin CTSG to release the active N-terminal peptide Ac2-26.

It localises to the nucleus. Its subcellular location is the cytoplasm. It is found in the cell projection. The protein localises to the cilium. The protein resides in the basolateral cell membrane. It localises to the lateral cell membrane. Its subcellular location is the cell membrane. It is found in the apical cell membrane. The protein localises to the membrane. The protein resides in the early endosome. It localises to the cytoplasmic vesicle membrane. Its subcellular location is the endosome membrane. It is found in the secreted. The protein localises to the extracellular space. The protein resides in the extracellular exosome. It localises to the cytoplasmic vesicle. Its subcellular location is the secretory vesicle lumen. It is found in the phagocytic cup. Functionally, plays important roles in the innate immune response as effector of glucocorticoid-mediated responses and regulator of the inflammatory process. Has anti-inflammatory activity. Plays a role in glucocorticoid-mediated down-regulation of the early phase of the inflammatory response. Contributes to the adaptive immune response by enhancing signaling cascades that are triggered by T-cell activation, regulates differentiation and proliferation of activated T-cells. Promotes the differentiation of T-cells into Th1 cells and negatively regulates differentiation into Th2 cells. Has no effect on unstimulated T-cells. Negatively regulates hormone exocytosis via activation of the formyl peptide receptors and reorganization of the actin cytoskeleton. Has high affinity for Ca(2+) and can bind up to eight Ca(2+) ions. Displays Ca(2+)-dependent binding to phospholipid membranes. Plays a role in the formation of phagocytic cups and phagosomes. Plays a role in phagocytosis by mediating the Ca(2+)-dependent interaction between phagosomes and the actin cytoskeleton. Functions at least in part by activating the formyl peptide receptors and downstream signaling cascades. Promotes chemotaxis of granulocytes and monocytes via activation of the formyl peptide receptors. Promotes rearrangement of the actin cytoskeleton, cell polarization and cell migration. Promotes resolution of inflammation and wound healing. Acts via neutrophil N-formyl peptide receptors to enhance the release of CXCL2. The polypeptide is Annexin A1 (ANXA1) (Equus caballus (Horse)).